The sequence spans 185 residues: Alkyl hydroperoxide reductase AhpD (185 aa).

C131 acts as the Proton donor in catalysis. C131 and C134 are joined by a disulfide. The Cysteine sulfenic acid (-SOH) intermediate role is filled by C134.

It belongs to the AhpD family. Homotrimer.

The catalysed reaction is N(6)-[(R)-dihydrolipoyl]-L-lysyl-[lipoyl-carrier protein] + a hydroperoxide = N(6)-[(R)-lipoyl]-L-lysyl-[lipoyl-carrier protein] + an alcohol + H2O. Antioxidant protein with alkyl hydroperoxidase activity. Required for the reduction of the AhpC active site cysteine residues and for the regeneration of the AhpC enzyme activity. This chain is Alkyl hydroperoxide reductase AhpD, found in Frankia alni (strain DSM 45986 / CECT 9034 / ACN14a).